A 228-amino-acid chain; its full sequence is UPF0758 protein SH1266 (228 aa).

The MPN domain occupies 102–224 (KITSPSDVSN…YASLVEEGYF (123 aa)). Zn(2+)-binding residues include H173, H175, and D186. Positions 173-186 (HNHPSGDVTPSKED) match the JAMM motif motif.

This sequence belongs to the UPF0758 family.

In Staphylococcus haemolyticus (strain JCSC1435), this protein is UPF0758 protein SH1266.